Here is a 643-residue protein sequence, read N- to C-terminus: DNA-directed RNA polymerase subunit beta' (643 aa).

The Zn(2+) site is built by cysteine 83, cysteine 85, cysteine 98, and cysteine 101. Mg(2+) is bound by residues aspartate 480, aspartate 482, and aspartate 484.

This sequence belongs to the RNA polymerase beta' chain family. RpoC1 subfamily. In plastids the minimal PEP RNA polymerase catalytic core is composed of four subunits: alpha, beta, beta', and beta''. When a (nuclear-encoded) sigma factor is associated with the core the holoenzyme is formed, which can initiate transcription. The cofactor is Mg(2+). Requires Zn(2+) as cofactor.

The protein localises to the plastid. Its subcellular location is the organellar chromatophore. The catalysed reaction is RNA(n) + a ribonucleoside 5'-triphosphate = RNA(n+1) + diphosphate. Functionally, DNA-dependent RNA polymerase catalyzes the transcription of DNA into RNA using the four ribonucleoside triphosphates as substrates. The protein is DNA-directed RNA polymerase subunit beta' of Paulinella chromatophora.